A 304-amino-acid chain; its full sequence is Probable 5-dehydro-4-deoxyglucarate dehydratase (304 aa).

It belongs to the DapA family.

The catalysed reaction is 5-dehydro-4-deoxy-D-glucarate + H(+) = 2,5-dioxopentanoate + CO2 + H2O. Its pathway is carbohydrate acid metabolism; D-glucarate degradation; 2,5-dioxopentanoate from D-glucarate: step 2/2. The chain is Probable 5-dehydro-4-deoxyglucarate dehydratase from Pseudarthrobacter chlorophenolicus (strain ATCC 700700 / DSM 12829 / CIP 107037 / JCM 12360 / KCTC 9906 / NCIMB 13794 / A6) (Arthrobacter chlorophenolicus).